Consider the following 91-residue polypeptide: Acylphosphatase (91 aa).

One can recognise an Acylphosphatase-like domain in the interval Arg5–Gly91. Residues Arg20 and Asn38 contribute to the active site.

This sequence belongs to the acylphosphatase family.

It carries out the reaction an acyl phosphate + H2O = a carboxylate + phosphate + H(+). The protein is Acylphosphatase (acyP) of Thermococcus kodakarensis (strain ATCC BAA-918 / JCM 12380 / KOD1) (Pyrococcus kodakaraensis (strain KOD1)).